We begin with the raw amino-acid sequence, 177 residues long: Transcription factor E (177 aa).

Residues 9–91 (VEELLNELVG…YWRINYDKAL (83 aa)) enclose the HTH TFE/IIEalpha-type domain.

The protein belongs to the TFE family. In terms of assembly, monomer. Interaction with RNA polymerase subunits RpoF and RpoE is necessary for Tfe stimulatory transcription activity. Able to interact with Tbp and RNA polymerase in the absence of DNA promoter. Interacts both with the preinitiation and elongation complexes.

In terms of biological role, transcription factor that plays a role in the activation of archaeal genes transcribed by RNA polymerase. Facilitates transcription initiation by enhancing TATA-box recognition by TATA-box-binding protein (Tbp), and transcription factor B (Tfb) and RNA polymerase recruitment. Not absolutely required for transcription in vitro, but particularly important in cases where Tbp or Tfb function is not optimal. It dynamically alters the nucleic acid-binding properties of RNA polymerases by stabilizing the initiation complex and destabilizing elongation complexes. Seems to translocate with the RNA polymerase following initiation and acts by binding to the non template strand of the transcription bubble in elongation complexes. This chain is Transcription factor E, found in Archaeoglobus fulgidus (strain ATCC 49558 / DSM 4304 / JCM 9628 / NBRC 100126 / VC-16).